The sequence spans 644 residues: 3D-(3,5/4)-trihydroxycyclohexane-1,2-dione hydrolase 1 (644 aa).

Thiamine diphosphate is bound at residue Glu65. The interval 442–522 (SLPGDLQRMW…INVLLFDNSG (81 aa)) is thiamine pyrophosphate binding. Mg(2+) is bound by residues Asp493 and Asn520.

Belongs to the TPP enzyme family. The cofactor is Mg(2+). Thiamine diphosphate serves as cofactor.

It carries out the reaction 3D-3,5/4-trihydroxycyclohexane-1,2-dione + H2O = 5-deoxy-D-glucuronate + H(+). Its pathway is polyol metabolism; myo-inositol degradation into acetyl-CoA; acetyl-CoA from myo-inositol: step 3/7. In terms of biological role, involved in the cleavage of the C1-C2 bond of 3D-(3,5/4)-trihydroxycyclohexane-1,2-dione (THcHDO) to yield 5-deoxy-glucuronate (5DG). The chain is 3D-(3,5/4)-trihydroxycyclohexane-1,2-dione hydrolase 1 from Bacillus cereus (strain ZK / E33L).